The primary structure comprises 473 residues: Vasculin (473 aa).

Disordered stretches follow at residues 1–26 (MAQH…SLNF), 44–163 (RRRH…EYPP), 196–240 (SQPV…SFPH), 258–286 (NFSP…QQPR), and 305–342 (LKRD…QERD). At serine 49 the chain carries Phosphoserine. The residue at position 87 (arginine 87) is an Omega-N-methylarginine. Positions 93-107 (GSSRSRSSIFHSGKS) are enriched in low complexity. Positions 119 to 133 (ETGRKDDKRERKQFE) are enriched in basic and acidic residues. Serine 274, serine 276, serine 322, and serine 381 each carry phosphoserine. The segment covering 305 to 329 (LKRDRVEEEHEDESHVGSEKDDDSF) has biased composition (basic and acidic residues). Residues 444–473 (GPWKNSTFKPTIENDDTETSSSDTSDDDDV) are disordered. The span at 456-473 (ENDDTETSSSDTSDDDDV) shows a compositional bias: acidic residues.

Belongs to the vasculin family. Interacts with GTF2B, GTF2F2, RNA polymerase II and TBP.

Its subcellular location is the nucleus. In terms of biological role, functions as a GC-rich promoter-specific transactivating transcription factor. The sequence is that of Vasculin (GPBP1) from Bos taurus (Bovine).